The sequence spans 102 residues: ATP-dependent Clp protease adapter protein ClpS (102 aa).

It belongs to the ClpS family. Binds to the N-terminal domain of the chaperone ClpA.

Functionally, involved in the modulation of the specificity of the ClpAP-mediated ATP-dependent protein degradation. The polypeptide is ATP-dependent Clp protease adapter protein ClpS (Shewanella piezotolerans (strain WP3 / JCM 13877)).